A 128-amino-acid chain; its full sequence is uncharacterized protein (128 aa).

Helical transmembrane passes span 19-41, 54-71, and 75-97; these read MAIVTNTPIWVWCVLLCLLYVGS, LTFLPLIFLPIVIMSIMQ, and PLIAGFGFIVGLALGLFFRVDNL.

It localises to the cell membrane. This is an uncharacterized protein from Pasteurella multocida (strain Pm70).